Consider the following 284-residue polypeptide: Cell division protein ZipA (284 aa).

A topological domain (periplasmic) is located at residue methionine 1. The chain crosses the membrane as a helical span at residues 2-22 (EIGLREWLIVIGIIVIAGILF). The Cytoplasmic segment spans residues 23-284 (DGWRRMRGGK…FERRALTQKR (262 aa)). The interval 47-140 (PDDEGSAELL…SASHSDKDQP (94 aa)) is disordered. Composition is skewed to basic and acidic residues over residues 62–75 (LDTHKEPQLDEHDL), 83–102 (REPRESSSSKRGKRGGEPHQ), and 119–140 (SRDDDFPVEESKSASHSDKDQP).

This sequence belongs to the ZipA family. As to quaternary structure, interacts with FtsZ via their C-terminal domains.

Its subcellular location is the cell inner membrane. In terms of biological role, essential cell division protein that stabilizes the FtsZ protofilaments by cross-linking them and that serves as a cytoplasmic membrane anchor for the Z ring. Also required for the recruitment to the septal ring of downstream cell division proteins. This is Cell division protein ZipA from Pseudomonas fluorescens (strain ATCC BAA-477 / NRRL B-23932 / Pf-5).